A 386-amino-acid polypeptide reads, in one-letter code: Antilisterial bacteriocin subtilosin biosynthesis protein AlbE (386 aa).

In terms of biological role, involved in the production of the bacteriocin subtilosin. This Bacillus subtilis protein is Antilisterial bacteriocin subtilosin biosynthesis protein AlbE (albE).